Consider the following 252-residue polypeptide: Receptor expression-enhancing protein 3-B (252 aa).

The next 3 helical transmembrane spans lie at 1 to 21 (MVSG…YPAY), 35 to 55 (YVRW…ETIA), and 57 to 77 (LTVS…VWLL). The disordered stretch occupies residues 163-225 (ETAETRFFPD…GLRRSQSMRS (63 aa)). The segment covering 198-211 (RTDEDVEVNSEDEV) has biased composition (acidic residues).

This sequence belongs to the DP1 family.

It is found in the endoplasmic reticulum membrane. In terms of biological role, microtubule-binding protein required to ensure proper cell division and nuclear envelope reassembly by sequestering the endoplasmic reticulum away from chromosomes during mitosis. Probably acts by clearing the endoplasmic reticulum membrane from metaphase chromosomes. This chain is Receptor expression-enhancing protein 3-B (reep3-b), found in Xenopus laevis (African clawed frog).